The following is a 144-amino-acid chain: Large ribosomal subunit protein uL15 (144 aa).

The segment at 1–58 (MKLNTLSPAAGAKHAAKRVGRGIGSGLGKTAGRGHKGQKSRSGGSIRPGFEGGQMPLK) is disordered. The span at 21 to 31 (RGIGSGLGKTA) shows a compositional bias: gly residues.

The protein belongs to the universal ribosomal protein uL15 family. In terms of assembly, part of the 50S ribosomal subunit.

Binds to the 23S rRNA. This chain is Large ribosomal subunit protein uL15, found in Psychromonas ingrahamii (strain DSM 17664 / CCUG 51855 / 37).